Here is a 122-residue protein sequence, read N- to C-terminus: Vitelline membrane protein 15a-3 (122 aa).

The first 17 residues, 1–17, serve as a signal peptide directing secretion; the sequence is MNKFIILALFAVAAASA. The segment covering 21-49 has biased composition (pro residues); sequence YPPPPPKPYHAPPPPPHHAHPPPPPPPPA. Disordered stretches follow at residues 21–63 and 103–122; these read YPPP…APVV and PAPAPHYRAPESDSFDQFEE. The VM domain occupies 69 to 109; sequence HAPHAKCGANLLVGCAPSVAHAPCVPLHGHGHGYPAPAPHY.

Belongs to the vitelline membrane protein family. In terms of tissue distribution, expressed in the middle and posterior regions of the follicle cells.

It localises to the secreted. The protein is Vitelline membrane protein 15a-3 of Aedes aegypti (Yellowfever mosquito).